The following is a 366-amino-acid chain: Mitogen-activated protein kinase CPK1 (366 aa).

The Protein kinase domain maps to 17–302; sequence KLEEIVGEGA…SPSKRITVEE (286 aa). Residues 22–30 and Lys45 contribute to the ATP site; that span reads VGEGAYGLV. Residue Asp140 is the Proton acceptor of the active site. Thr181 carries the phosphothreonine modification. The TXY signature appears at 181 to 183; that stretch reads TEY. Phosphotyrosine is present on Tyr183.

Belongs to the protein kinase superfamily. CMGC Ser/Thr protein kinase family. MAP kinase subfamily. It depends on Mg(2+) as a cofactor. Dually phosphorylated on Thr-181 and Tyr-183, which activates the enzyme.

It carries out the reaction L-seryl-[protein] + ATP = O-phospho-L-seryl-[protein] + ADP + H(+). The enzyme catalyses L-threonyl-[protein] + ATP = O-phospho-L-threonyl-[protein] + ADP + H(+). Activated by tyrosine and threonine phosphorylation. Functionally, responds to activation by environmental stress by phosphorylating downstream targets. In Cryptococcus neoformans var. neoformans serotype D (strain B-3501A) (Filobasidiella neoformans), this protein is Mitogen-activated protein kinase CPK1 (CPK1).